A 466-amino-acid chain; its full sequence is DNA polymerase delta subunit 3 (466 aa).

Residue A2 is modified to N-acetylalanine. Disordered regions lie at residues 145–218 and 255–466; these read PAES…KEVM and EQEV…FQRK. 3 stretches are compositionally biased toward basic and acidic residues: residues 205–218, 255–265, and 281–297; these read DANKETKTEAKEVM, EQEVKEEKKVE, and DLKKSSKKAEPVRMQQK. A Glycyl lysine isopeptide (Lys-Gly) (interchain with G-Cter in SUMO); alternate cross-link involves residue K259. K259 participates in a covalent cross-link: Glycyl lysine isopeptide (Lys-Gly) (interchain with G-Cter in SUMO2); alternate. A Glycyl lysine isopeptide (Lys-Gly) (interchain with G-Cter in SUMO2) cross-link involves residue K262. S308 carries the post-translational modification Phosphoserine. Pro residues predominate over residues 350–360; that stretch reads PSPPPPSPSPE. Residues S407 and S409 each carry the phosphoserine modification. The residue at position 411 (T411) is a Phosphothreonine. Phosphoserine is present on S413. Residues 432 to 441 show a composition bias toward basic and acidic residues; sequence VKKEPKEERK. K433 participates in a covalent cross-link: Glycyl lysine isopeptide (Lys-Gly) (interchain with G-Cter in SUMO); alternate. K433 is covalently cross-linked (Glycyl lysine isopeptide (Lys-Gly) (interchain with G-Cter in SUMO2); alternate). Positions 456 to 463 match the PIP-box motif; the sequence is QVAITGFF.

As to quaternary structure, component of both the DNA polymerase delta and DNA polymerase zeta complexes. The tetrameric DNA polymerase delta complex (Pol-delta4), which consists of POLD1/p125, POLD2/p50, POLD3/p66/p68 and POLD4/p12, with POLD1 bearing DNA polymerase and 3' to 5' proofreading exonuclease activities. Within this complex, directly interacts with POLD2. Following stress caused by DNA damaging agents or by replication stress, POLD4 is degraded and Pol-delta4 is converted into a trimeric form of the complex (Pol-delta3), which consists of POLD1, POLD2 and POLD3. Pol-delta3 is the major form occurring at S phase replication sites, as well as DNA damage sites. Directly interacts with PCNA, as do POLD1 and POLD4; this interaction stimulates Pol-delta polymerase activity. Component of the DNA polymerase zeta complex (POLZ), which consists of REV3L, MAD2L2, POLD2 and POLD3, with REV3L bearing DNA polymerase catalytic activity. The DNA polymerase delta complex interacts with POLDIP2; this interaction is probably mediated through direct binding to POLD2. In terms of processing, ubiquitinated, but not targeted to the proteasome. Sumoylated. Sumoylation by SUMO3 may be predominant.

It localises to the cytoplasm. It is found in the nucleus. Its function is as follows. Accessory component of both the DNA polymerase delta complex and the DNA polymerase zeta complex. As a component of the trimeric and tetrameric DNA polymerase delta complexes (Pol-delta3 and Pol-delta4, respectively), plays a role in high fidelity genome replication, including in lagging strand synthesis, and repair. Required for optimal Pol-delta activity. Stabilizes the Pol-delta complex and plays a major role in Pol-delta stimulation by PCNA. Pol-delta3 and Pol-delta4 are characterized by the absence or the presence of POLD4. They exhibit differences in catalytic activity. Most notably, Pol-delta3 shows higher proofreading activity than Pol-delta4. Although both Pol-delta3 and Pol-delta4 process Okazaki fragments in vitro, Pol-delta3 may also be better suited to fulfill this task, exhibiting near-absence of strand displacement activity compared to Pol-delta4 and stalling on encounter with the 5'-blocking oligonucleotides. Pol-delta3 idling process may avoid the formation of a gap, while maintaining a nick that can be readily ligated. Along with DNA polymerase kappa, DNA polymerase delta carries out approximately half of nucleotide excision repair (NER) synthesis following UV irradiation. In this context, POLD3, along with PCNA and RFC1-replication factor C complex, is required to recruit POLD1, the catalytic subunit of the polymerase delta complex, to DNA damage sites. Under conditions of DNA replication stress, required for the repair of broken replication forks through break-induced replication (BIR). Involved in the translesion synthesis (TLS) of templates carrying O6-methylguanine or abasic sites performed by Pol-delta4, independently of DNA polymerase zeta (REV3L) or eta (POLH). Facilitates abasic site bypass by DNA polymerase delta by promoting extension from the nucleotide inserted opposite the lesion. Also involved in TLS, as a component of the tetrameric DNA polymerase zeta complex. Along with POLD2, dramatically increases the efficiency and processivity of DNA synthesis of the DNA polymerase zeta complex compared to the minimal zeta complex, consisting of only REV3L and REV7. This chain is DNA polymerase delta subunit 3 (POLD3), found in Bos taurus (Bovine).